A 99-amino-acid polypeptide reads, in one-letter code: Prostate and testis expressed protein 4 (99 aa).

The signal sequence occupies residues 1–23; it reads MNSVTKISTLLIVILSFLCFVEG. In terms of domain architecture, UPAR/Ly6 spans 24–99; the sequence is LICNSCEKSR…CCEKNLCNSF (76 aa). 4 disulfides stabilise this stretch: cysteine 26-cysteine 52, cysteine 29-cysteine 37, cysteine 44-cysteine 70, and cysteine 74-cysteine 90.

As to expression, expressed in prostate, testis, eye, kidney and skeletal muscle. Expressed in the dorsal lobe of prostate. Not expressed in the ventral lobe of prostate.

The protein resides in the secreted. Functionally, enhances sperm motility. Binds to calmodulin and inhibits calcium transport into spermatozoa. May modulate the function of nicotinic acetylcholine receptors. The protein is Prostate and testis expressed protein 4 (Pate4) of Mus musculus (Mouse).